We begin with the raw amino-acid sequence, 101 residues long: Small ribosomal subunit protein uS14 (101 aa).

A disordered region spans residues 51 to 70 (LPRDSSPSRQRNRCRQTGRP).

Belongs to the universal ribosomal protein uS14 family. In terms of assembly, part of the 30S ribosomal subunit. Contacts proteins S3 and S10.

Functionally, binds 16S rRNA, required for the assembly of 30S particles and may also be responsible for determining the conformation of the 16S rRNA at the A site. This chain is Small ribosomal subunit protein uS14, found in Salmonella arizonae (strain ATCC BAA-731 / CDC346-86 / RSK2980).